Consider the following 261-residue polypeptide: uncharacterized protein (261 aa).

The N-acetyltransferase domain occupies 135-261 (LVLKRIDEDI…VTEYTIYYSG (127 aa)).

The protein belongs to the acetyltransferase family.

This is an uncharacterized protein from Bacillus subtilis (strain 168).